The sequence spans 713 residues: Low-density lipoprotein receptor-related protein 10 (713 aa).

An N-terminal signal peptide occupies residues 1 to 17 (MLSALPLLFLLLGGALA). Topologically, residues 18–441 (RPDRITFPRS…WDCSYALPRK (424 aa)) are extracellular. Cystine bridges form between Cys29-Cys58 and Cys81-Cys99. Residues 29–137 (CEAPPAVLSE…QGFLLTYSQD (109 aa)) form the CUB 1 domain. Asn57 carries N-linked (GlcNAc...) asparagine glycosylation. The N-linked (GlcNAc...) asparagine glycan is linked to Asn112. An LDL-receptor class A 1 domain is found at 140–176 (LCLQEEFQCLNHRCIPAAQRCDGIDACGDGSDEAGCS). 4 disulfides stabilise this stretch: Cys141/Cys153, Cys148/Cys166, Cys160/Cys175, and Cys193/Cys221. In terms of domain architecture, CUB 2 spans 193–306 (CNLTLEDFYG…RGFNATYHVR (114 aa)). Residues Asn194 and Asn300 are each glycosylated (N-linked (GlcNAc...) asparagine). LDL-receptor class A domains follow at residues 308 to 355 (YCLP…EGCP), 356 to 398 (GCPP…RRCR), and 399 to 435 (HCQP…WDCS). 9 cysteine pairs are disulfide-bonded: Cys309–Cys332, Cys316–Cys345, Cys339–Cys354, Cys357–Cys375, Cys364–Cys388, Cys382–Cys397, Cys400–Cys412, Cys407–Cys425, and Cys419–Cys434. Residues 442 to 462 (VITAAVIGSLVCGLLLVIALG) form a helical membrane-spanning segment. Residues 463–713 (CTCKLYAIRT…VEAEDEPLLA (251 aa)) lie on the Cytoplasmic side of the membrane. Positions 566–636 (LLPRTNTPAR…TLPALATVSE (71 aa)) are disordered. Position 596 is a phosphothreonine (Thr596). The span at 614–626 (PPLPIKTPIPTPS) shows a compositional bias: pro residues.

This sequence belongs to the LDLR family. Highly expressed in heart, lung, liver and liver. Expressed at low level in brain and spleen. Weakly or not expressed in testis and skeletal muscle. In liver, it is expressed in hepatocytes and at higher level in sinusoidal lining. In the kidney, it is expressed in peritubular capillaries. In brain, it is expressed in the epithelium of the choroid plexus ependymal cells of the third ventricle pia matter, and to lesser extent in hippocampal fields CA2 and CA3.

The protein resides in the membrane. It is found in the coated pit. In terms of biological role, probable receptor, which is involved in the internalization of lipophilic molecules and/or signal transduction. May be involved in the uptake of lipoprotein APOE in liver. This Mus musculus (Mouse) protein is Low-density lipoprotein receptor-related protein 10 (Lrp10).